The chain runs to 2151 residues: RNA-directed RNA polymerase L (2151 aa).

Mn(2+) is bound by residues His36, Glu54, Asp97, Glu110, and Val111. Residue Lys124 is the For endonuclease activity of the active site. A RdRp catalytic domain is found at 956–1142; it reads NGKFIRMKRK…SVNTEMWKSM (187 aa). A Mg(2+)-binding site is contributed by Asp1099.

It belongs to the Bunyavirales RNA polymerase family. Interacts with the viral nucleoprotein. Mn(2+) is required as a cofactor. It depends on Mg(2+) as a cofactor.

It is found in the host cytoplasm. Its subcellular location is the host perinuclear region. The enzyme catalyses RNA(n) + a ribonucleoside 5'-triphosphate = RNA(n+1) + diphosphate. RNA-dependent RNA polymerase, which is responsible for the replication and transcription of the viral RNA genome using antigenomic RNA as an intermediate. During transcription, synthesizes subgenomic RNAs and assures their capping by a cap-snatching mechanism, which involves the endonuclease activity cleaving the host capped pre-mRNAs. These short capped RNAs are then used as primers for viral transcription. Cleaves ssRNA substrates but not DNA. Seems to downregulate the expression of its own and heterologous mRNAs through its endonuclease activity. This is RNA-directed RNA polymerase L from Apodemus agrarius (Eurasian field mouse).